Reading from the N-terminus, the 223-residue chain is MKFFIFTCLLAVALAKHKMEHVSSSEEPINISQEIYKQEKNMAIHPRKEKLCTTSCEEVVRNADEEEYSIRSSSEESAEVAPEEVKITVDDKHYQKALNEINQFYQKFPQYLQYLYQGPIVLNPWDQVKRNAGPFTPTVNREQLSTSEENSKKTIDMESTEVFTKKTKLTEEEKNRLNFLKKISQYYQKFAWPQYLKTVDQHQKAMKPWTQPKTNAIPYVRYL.

The N-terminal stretch at 1–15 is a signal peptide; the sequence is MKFFIFTCLLAVALA. Phosphoserine is present on residues S23, S24, S25, S72, S73, S74, S77, S145, S147, S151, and S159. Residues 77 to 141 constitute a repeat; sequence SAEVAPEEVK…AGPFTPTVNR (65 aa). A repeat spans 159–223; the sequence is STEVFTKKTK…TNAIPYVRYL (65 aa).

This sequence belongs to the alpha-casein family. As to expression, mammary gland specific. Secreted in milk.

It is found in the secreted. Functionally, important role in the capacity of milk to transport calcium phosphate. The sequence is that of Alpha-S2-casein (CSN1S2) from Ovis aries (Sheep).